Reading from the N-terminus, the 317-residue chain is Porphobilinogen deaminase (317 aa).

Cysteine 245 carries the S-(dipyrrolylmethanemethyl)cysteine modification.

This sequence belongs to the HMBS family. In terms of assembly, monomer. Requires dipyrromethane as cofactor.

It catalyses the reaction 4 porphobilinogen + H2O = hydroxymethylbilane + 4 NH4(+). Its pathway is porphyrin-containing compound metabolism; protoporphyrin-IX biosynthesis; coproporphyrinogen-III from 5-aminolevulinate: step 2/4. It functions in the pathway porphyrin-containing compound metabolism; chlorophyll biosynthesis. Its function is as follows. Tetrapolymerization of the monopyrrole PBG into the hydroxymethylbilane pre-uroporphyrinogen in several discrete steps. This chain is Porphobilinogen deaminase, found in Prochlorococcus marinus (strain MIT 9313).